The sequence spans 29 residues: Trypsin inhibitor 2 (29 aa).

Intrachain disulfides connect Cys-3–Cys-20, Cys-10–Cys-22, and Cys-16–Cys-28.

Belongs to the protease inhibitor I7 (squash-type serine protease inhibitor) family.

Its subcellular location is the secreted. Inhibits trypsin. This chain is Trypsin inhibitor 2, found in Bryonia dioica (Red bryony).